The primary structure comprises 77 residues: Small ribosomal subunit protein uS17 (77 aa).

The protein belongs to the universal ribosomal protein uS17 family. Part of the 30S ribosomal subunit.

In terms of biological role, one of the primary rRNA binding proteins, it binds specifically to the 5'-end of 16S ribosomal RNA. The sequence is that of Small ribosomal subunit protein uS17 from Rickettsia canadensis (strain McKiel).